The sequence spans 158 residues: Large ribosomal subunit protein uL15 (158 aa).

Residues 1-13 (MKLNEIKDNEGST) are compositionally biased toward basic and acidic residues. Residues 1–45 (MKLNEIKDNEGSTHSRKRLGRGIGSGSGKTGGRGVKGQKSRSGVA) are disordered. The segment covering 21–35 (RGIGSGSGKTGGRGV) has biased composition (gly residues).

It belongs to the universal ribosomal protein uL15 family. Part of the 50S ribosomal subunit.

Functionally, binds to the 23S rRNA. The protein is Large ribosomal subunit protein uL15 of Rhizobium leguminosarum bv. trifolii (strain WSM2304).